Reading from the N-terminus, the 579-residue chain is Nif-specific regulatory protein (579 aa).

Positions 40–187 (DPVAEVPQIF…MVASLLEQAL (148 aa)) constitute a GAF domain. The Sigma-54 factor interaction domain occupies 226–454 (IVGSSPAIAE…LENCVNRAAA (229 aa)). ATP contacts are provided by residues 254-261 (GESGTGKE) and 317-326 (ADGGTLFLDE). The inter-domain linker stretch occupies residues 464–536 (EELACRQGAC…PLRTKTAQLS (73 aa)). A divalent metal cation contacts are provided by cysteine 468 and cysteine 473. Positions 502–529 (RVSAPPPEPAPAPEPAPEAPPREEVPLR) are disordered. 7 consecutive repeat copies span residues 505 to 506 (AP), 507 to 508 (PP), 509 to 510 (EP), 511 to 512 (AP), 513 to 514 (AP), 515 to 516 (EP), and 517 to 518 (AP). The tract at residues 505-518 (APPPEPAPAPEPAP) is 7 X 2 AA tandem repeats of X-P. Residues 505–520 (APPPEPAPAPEPAPEA) show a composition bias toward pro residues. The segment at 537-579 (REELLRALESAGWVQAKAARLLGMTPRQIAYALQKFEIELRKI) is C-terminal DNA-binding domain. The H-T-H motif DNA-binding region spans 551–570 (QAKAARLLGMTPRQIAYALQ).

In terms of assembly, interacts with sigma-54.

Required for activation of most nif operons, which are directly involved in nitrogen fixation. This is Nif-specific regulatory protein (nifA1) from Rhodobacter capsulatus (Rhodopseudomonas capsulata).